A 139-amino-acid chain; its full sequence is NADH-quinone oxidoreductase subunit A (139 aa).

A run of 3 helical transmembrane segments spans residues 11–31 (LWPL…MLAL), 70–90 (LIAI…AWAI), and 97–117 (WPGY…LVYL).

This sequence belongs to the complex I subunit 3 family. NDH-1 is composed of 14 different subunits. Subunits NuoA, H, J, K, L, M, N constitute the membrane sector of the complex.

The protein localises to the cell inner membrane. It carries out the reaction a quinone + NADH + 5 H(+)(in) = a quinol + NAD(+) + 4 H(+)(out). In terms of biological role, NDH-1 shuttles electrons from NADH, via FMN and iron-sulfur (Fe-S) centers, to quinones in the respiratory chain. The immediate electron acceptor for the enzyme in this species is believed to be ubiquinone. Couples the redox reaction to proton translocation (for every two electrons transferred, four hydrogen ions are translocated across the cytoplasmic membrane), and thus conserves the redox energy in a proton gradient. This chain is NADH-quinone oxidoreductase subunit A, found in Methylococcus capsulatus (strain ATCC 33009 / NCIMB 11132 / Bath).